The following is a 307-amino-acid chain: uncharacterized protein (307 aa).

Residues 254–278 form a disordered region; that stretch reads HSRHHRRHHRRHHHHHHQNSSHSDE. Over residues 255-272 the composition is skewed to basic residues; sequence SRHHRRHHRRHHHHHHQN.

The protein to yeast YOR062c.

This is an uncharacterized protein from Saccharomyces cerevisiae (strain ATCC 204508 / S288c) (Baker's yeast).